A 183-amino-acid polypeptide reads, in one-letter code: Large ribosomal subunit protein uL6 (183 aa).

This sequence belongs to the universal ribosomal protein uL6 family. In terms of assembly, part of the 50S ribosomal subunit.

Its function is as follows. This protein binds to the 23S rRNA, and is important in its secondary structure. It is located near the subunit interface in the base of the L7/L12 stalk, and near the tRNA binding site of the peptidyltransferase center. The sequence is that of Large ribosomal subunit protein uL6 from Chlamydia muridarum (strain MoPn / Nigg).